Reading from the N-terminus, the 289-residue chain is Rhodopsin (289 aa).

Over 1-7 (YLVNPAA) the chain is Extracellular. A helical transmembrane segment spans residues 8 to 32 (YAALGAYMFLLILIGFPINFLTLYV). Residues 33 to 44 (TLEHKKLRTPLN) lie on the Cytoplasmic side of the membrane. The helical transmembrane segment at 45–67 (YILLNLAVGNLFMVLGGFTTTMY) threads the bilayer. At 68 to 81 (TSMHGYFVLGRLGC) the chain is on the extracellular side. Cysteine 81 and cysteine 158 are joined by a disulfide. Residues 82 to 104 (NLEGFFATLGGEIALWSLVVLAI) traverse the membrane as a helical segment. Positions 105-107 (ERW) match the 'Ionic lock' involved in activated form stabilization motif. Topologically, residues 105–123 (ERWIVVCKPISKFRFTEDH) are cytoplasmic. Residues 124-144 (AIMGLAFSWVMGLACAVPPLV) form a helical membrane-spanning segment. At 145 to 173 (GWSRYIPEGMKCSCGVDYYTRAEGFNNES) the chain is on the extracellular side. Residue asparagine 171 is glycosylated (N-linked (GlcNAc...) asparagine). The helical transmembrane segment at 174–195 (FVIYMFIVHFLIPLSVIFFCYG) threads the bilayer. Residues 196–223 (RLLCAVKEAAAAQQESETTQRAEKEVSR) lie on the Cytoplasmic side of the membrane. A helical membrane pass occupies residues 224–245 (MVVIMVIGFLVCWLPYASVAWW). Over 246–257 (IFCNQGSDFGPI) the chain is Extracellular. The helical transmembrane segment at 258 to 279 (FMTLPSFFAKRPAIYNPMIYIC) threads the bilayer. N6-(retinylidene)lysine is present on lysine 267. At 280 to 289 (MNKQFRHCMI) the chain is on the cytoplasmic side.

It belongs to the G-protein coupled receptor 1 family. Opsin subfamily. Post-translationally, phosphorylated on some or all of the serine and threonine residues present in the C-terminal region. In terms of processing, contains one covalently linked retinal chromophore.

It is found in the membrane. Its subcellular location is the cell projection. The protein resides in the cilium. The protein localises to the photoreceptor outer segment. Its function is as follows. Photoreceptor required for image-forming vision at low light intensity. While most salt water fish species use retinal as chromophore, most freshwater fish use 3-dehydroretinal, or a mixture of retinal and 3-dehydroretinal. Light-induced isomerization of 11-cis to all-trans retinal triggers a conformational change that activates signaling via G-proteins. Subsequent receptor phosphorylation mediates displacement of the bound G-protein alpha subunit by arrestin and terminates signaling. This chain is Rhodopsin (rho), found in Cottinella boulengeri (Short-headed sculpin).